The chain runs to 299 residues: Taste receptor type 2 member 50 (299 aa).

A topological domain (extracellular) is located at residue methionine 1. Residues isoleucine 2–phenylalanine 22 form a helical membrane-spanning segment. Over alanine 23–arginine 55 the chain is Cytoplasmic. The chain crosses the membrane as a helical span at residues valine 56–tyrosine 76. Over serine 77–alanine 87 the chain is Extracellular. A helical transmembrane segment spans residues tryptophan 88–leucine 108. Residues lysine 109–arginine 126 lie on the Cytoplasmic side of the membrane. Residues serine 127–valine 147 traverse the membrane as a helical segment. The Extracellular portion of the chain corresponds to asparagine 148–threonine 181. An N-linked (GlcNAc...) asparagine glycan is attached at asparagine 161. The helical transmembrane segment at leucine 182–leucine 202 threads the bilayer. Residues cysteine 203–glutamine 229 lie on the Cytoplasmic side of the membrane. A helical transmembrane segment spans residues threonine 230 to tryptophan 250. The Extracellular segment spans residues serine 251–proline 259. A helical transmembrane segment spans residues valine 260 to isoleucine 280. Residues tryptophan 281–cysteine 299 are Cytoplasmic-facing.

It belongs to the G-protein coupled receptor T2R family.

The protein localises to the membrane. Its function is as follows. Receptor that may play a role in the perception of bitterness and is gustducin-linked. May play a role in sensing the chemical composition of the gastrointestinal content. The activity of this receptor may stimulate alpha gustducin, mediate PLC-beta-2 activation and lead to the gating of TRPM5. The polypeptide is Taste receptor type 2 member 50 (TAS2R50) (Macaca mulatta (Rhesus macaque)).